The sequence spans 624 residues: Phosphoenolpyruvate carboxykinase (ATP) 1 (624 aa).

The disordered stretch occupies residues 1 to 22; that stretch reads MASPNGGVTTYDYDDSDSAAPV. 322 to 329 contributes to the ATP binding site; it reads GLSGTGKT.

This sequence belongs to the phosphoenolpyruvate carboxykinase (ATP) family. As to quaternary structure, homohexamer. In terms of tissue distribution, green leaves but not in roots or etiolated shoots.

The protein resides in the cytoplasm. It catalyses the reaction oxaloacetate + ATP = phosphoenolpyruvate + ADP + CO2. It functions in the pathway carbohydrate biosynthesis; gluconeogenesis. The polypeptide is Phosphoenolpyruvate carboxykinase (ATP) 1 (PCK1) (Urochloa panicoides (Panic liverseed grass)).